Here is a 602-residue protein sequence, read N- to C-terminus: Elongation factor 4 (602 aa).

The 183-residue stretch at 7 to 189 (DKIRNFSIVA…AIVTRLPPPK (183 aa)) folds into the tr-type G domain. GTP-binding positions include 19-24 (DHGKST) and 136-139 (NKVD).

The protein belongs to the TRAFAC class translation factor GTPase superfamily. Classic translation factor GTPase family. LepA subfamily.

It localises to the cell inner membrane. The catalysed reaction is GTP + H2O = GDP + phosphate + H(+). In terms of biological role, required for accurate and efficient protein synthesis under certain stress conditions. May act as a fidelity factor of the translation reaction, by catalyzing a one-codon backward translocation of tRNAs on improperly translocated ribosomes. Back-translocation proceeds from a post-translocation (POST) complex to a pre-translocation (PRE) complex, thus giving elongation factor G a second chance to translocate the tRNAs correctly. Binds to ribosomes in a GTP-dependent manner. This is Elongation factor 4 from Caulobacter vibrioides (strain NA1000 / CB15N) (Caulobacter crescentus).